The primary structure comprises 385 residues: MNPVPAQREYFLDSIRAWLMLLGIPFHISLIYSSHTWHVNSTEPSLWLTLFNDFIHSFRMQVFFVISGYFSYMLFLRYPLKKWWKVRVERVGIPMLTAIPLLTLPQFIMLQYVKGKTKSWPGLSLYDKYNTLAWELISHLWFLLVLVVMTTLCVWIFKRIRNNLENSDKTNKKFSMVKLSVIFLCLGIGYAVIRRTIFIVYPPILSNGMFNFIVMQTLFYLPFFILGALAFIFPHLKALFTTPSRGCTLAAALAFVAYLLNQRYGSGDAWMYETESVITMVLGLWMVNVVFSFGHRLLNFQSARVTYFVNASLFIYLVHHPLTLFFGAYITPHITSNWLGFLCGLIFVVGIAIILYEIHLRIPLLKFLFSGKPVVKRENDKAPAR.

10 helical membrane-spanning segments follow: residues 17 to 37, 60 to 80, 91 to 111, 137 to 157, 173 to 193, 212 to 232, 239 to 259, 274 to 294, 311 to 331, and 338 to 358; these read AWLMLLGIPFHISLIYSSHTW, MQVFFVISGYFSYMLFLRYPL, VGIPMLTAIPLLTLPQFIMLQ, ISHLWFLLVLVVMTTLCVWIF, KFSMVKLSVIFLCLGIGYAVI, FIVMQTLFYLPFFILGALAFI, LFTTPSRGCTLAAALAFVAYL, TESVITMVLGLWMVNVVFSFG, ASLFIYLVHHPLTLFFGAYIT, and WLGFLCGLIFVVGIAIILYEI.

This sequence belongs to the acyltransferase 3 family. OpgC subfamily.

The protein resides in the cell membrane. It participates in glycan metabolism; osmoregulated periplasmic glucan (OPG) biosynthesis. In terms of biological role, necessary for the succinyl substitution of periplasmic glucans. Could catalyze the transfer of succinyl residues from the cytoplasmic side of the membrane to the nascent glucan backbones on the periplasmic side of the membrane. This Shigella dysenteriae serotype 1 (strain Sd197) protein is Glucans biosynthesis protein C.